The chain runs to 387 residues: uncharacterized protein (387 aa).

Disordered stretches follow at residues 1–126, 138–169, and 275–298; these read MDGR…GDDE, GNQG…RNEE, and SSIF…AGNK. The segment covering 32 to 45 has biased composition (basic and acidic residues); it reads SSDHRTSNSAESKK. 2 stretches are compositionally biased toward polar residues: residues 49-63 and 78-93; these read SGKS…NNDN and DLSS…SKGT. Residues 155-169 are compositionally biased toward basic and acidic residues; that stretch reads ENGKNDIEKNNRNEE. Positions 275 to 296 are enriched in polar residues; that stretch reads SSIFSDSQAVTTDDEGISSTAG.

The protein belongs to the ThrE exporter (TC 2.A.79) family.

This is an uncharacterized protein from Saccharomyces cerevisiae (strain ATCC 204508 / S288c) (Baker's yeast).